Here is a 413-residue protein sequence, read N- to C-terminus: Aspartate aminotransferase, cytoplasmic (413 aa).

L-aspartate contacts are provided by glycine 39, tryptophan 141, and asparagine 195. Position 259 is an N6-(pyridoxal phosphate)lysine (lysine 259). Arginine 387 contacts L-aspartate.

Belongs to the class-I pyridoxal-phosphate-dependent aminotransferase family. In terms of assembly, homodimer. Pyridoxal 5'-phosphate is required as a cofactor.

Its subcellular location is the cytoplasm. The enzyme catalyses L-aspartate + 2-oxoglutarate = oxaloacetate + L-glutamate. The catalysed reaction is L-cysteine + 2-oxoglutarate = 2-oxo-3-sulfanylpropanoate + L-glutamate. It catalyses the reaction (2S)-2-aminobutanoate + 2-oxoglutarate = 2-oxobutanoate + L-glutamate. It carries out the reaction 3-sulfino-L-alanine + 2-oxoglutarate = 3-sulfinopyruvate + L-glutamate. Its function is as follows. Biosynthesis of L-glutamate from L-aspartate or L-cysteine. Important regulator of levels of glutamate, the major excitatory neurotransmitter of the vertebrate central nervous system. Acts as a scavenger of glutamate in brain neuroprotection. The aspartate aminotransferase activity is involved in hepatic glucose synthesis during development and in adipocyte glyceroneogenesis. Using L-cysteine as substrate, regulates levels of mercaptopyruvate, an important source of hydrogen sulfide. Mercaptopyruvate is converted into H(2)S via the action of 3-mercaptopyruvate sulfurtransferase (3MST). Hydrogen sulfide is an important synaptic modulator and neuroprotectant in the brain. The chain is Aspartate aminotransferase, cytoplasmic from Bos taurus (Bovine).